A 260-amino-acid polypeptide reads, in one-letter code: Thiazole synthase (260 aa).

The active-site Schiff-base intermediate with DXP is Lys-100. 1-deoxy-D-xylulose 5-phosphate contacts are provided by residues Gly-162, 188 to 189 (AG), and 210 to 211 (NT).

This sequence belongs to the ThiG family. As to quaternary structure, homotetramer. Forms heterodimers with either ThiH or ThiS.

Its subcellular location is the cytoplasm. It catalyses the reaction [ThiS sulfur-carrier protein]-C-terminal-Gly-aminoethanethioate + 2-iminoacetate + 1-deoxy-D-xylulose 5-phosphate = [ThiS sulfur-carrier protein]-C-terminal Gly-Gly + 2-[(2R,5Z)-2-carboxy-4-methylthiazol-5(2H)-ylidene]ethyl phosphate + 2 H2O + H(+). The protein operates within cofactor biosynthesis; thiamine diphosphate biosynthesis. Catalyzes the rearrangement of 1-deoxy-D-xylulose 5-phosphate (DXP) to produce the thiazole phosphate moiety of thiamine. Sulfur is provided by the thiocarboxylate moiety of the carrier protein ThiS. In vitro, sulfur can be provided by H(2)S. In Wolinella succinogenes (strain ATCC 29543 / DSM 1740 / CCUG 13145 / JCM 31913 / LMG 7466 / NCTC 11488 / FDC 602W) (Vibrio succinogenes), this protein is Thiazole synthase.